A 565-amino-acid polypeptide reads, in one-letter code: Protein NRT1/ PTR FAMILY 5.15 (565 aa).

Transmembrane regions (helical) follow at residues 49 to 67 (FAYF…GPLG) and 80 to 100 (WSGT…AYLG). Threonine 104 is modified (phosphothreonine). The next 10 helical transmembrane spans lie at 110 to 130 (LIYI…IMGL), 142 to 162 (SIWV…GQGG), 189 to 209 (FFNW…IVVA), 217 to 237 (WAFG…IFLL), 331 to 351 (IPIW…ITFF), 368 to 388 (IPAA…VPLY), 409 to 429 (LQRI…AALV), 454 to 474 (IWWF…SMVG), 490 to 510 (IGLS…GFLI), and 534 to 554 (YFYW…LFIS).

Belongs to the major facilitator superfamily. Proton-dependent oligopeptide transporter (POT/PTR) (TC 2.A.17) family. Expressed in shoots, roots and leaves.

Its subcellular location is the membrane. This chain is Protein NRT1/ PTR FAMILY 5.15 (NPF5.15), found in Arabidopsis thaliana (Mouse-ear cress).